The following is a 141-amino-acid chain: Large ribosomal subunit protein uL11 (141 aa).

It belongs to the universal ribosomal protein uL11 family. Part of the ribosomal stalk of the 50S ribosomal subunit. Interacts with L10 and the large rRNA to form the base of the stalk. L10 forms an elongated spine to which L12 dimers bind in a sequential fashion forming a multimeric L10(L12)X complex. One or more lysine residues are methylated.

Forms part of the ribosomal stalk which helps the ribosome interact with GTP-bound translation factors. The chain is Large ribosomal subunit protein uL11 from Crocosphaera subtropica (strain ATCC 51142 / BH68) (Cyanothece sp. (strain ATCC 51142)).